The following is a 550-amino-acid chain: Methionine--tRNA ligase (550 aa).

Positions 13-23 match the 'HIGH' region motif; sequence PYANGEIHLGH. Zn(2+)-binding residues include Cys144, Cys147, Cys157, and Cys160. A 'KMSKS' region motif is present at residues 329–333; that stretch reads KMSKS. Lys332 is a binding site for ATP.

This sequence belongs to the class-I aminoacyl-tRNA synthetase family. MetG type 1 subfamily. Monomer. The cofactor is Zn(2+).

It localises to the cytoplasm. It carries out the reaction tRNA(Met) + L-methionine + ATP = L-methionyl-tRNA(Met) + AMP + diphosphate. Functionally, is required not only for elongation of protein synthesis but also for the initiation of all mRNA translation through initiator tRNA(fMet) aminoacylation. The protein is Methionine--tRNA ligase of Ruthia magnifica subsp. Calyptogena magnifica.